The chain runs to 235 residues: Claudin-16 (235 aa).

At 1–3 (MRD) the chain is on the cytoplasmic side. Residues 4–24 (LLQYIACFFAFFSAGFLIVAT) traverse the membrane as a helical segment. Residues 25 to 79 (WTDCWMVNADDSLEVSTKCRGLWWECVTNAFDGIRTCDEYDSILAEHPLKLVVTR) are Extracellular-facing. Residues 80–100 (ALMITADILAGFGFLTLLLGL) traverse the membrane as a helical segment. Topologically, residues 101–115 (DCVKFLPDEPYIKVR) are cytoplasmic. A helical membrane pass occupies residues 116–136 (ICFVAGATLLIAGTPGIIGSV). Over 137–169 (WYAVDVYVERSTLVLHNIFLGIQYKFGWSCWLG) the chain is Extracellular. Residues 170-190 (MAGSLGCFLAGAVLTCCLYLF) traverse the membrane as a helical segment. Topologically, residues 191 to 235 (KDVGPERNYPYSLRKAYSAAGVSMAKSYSAPRTETAKMYAVDTRV) are cytoplasmic. The Interaction with TJP1 motif lies at 233–235 (TRV).

The protein belongs to the claudin family. Can form heteropolymeric tight junction strands with other claudins. Interacts with CLDN19. Interacts (via PDZ-binding motif TRV) with TJP1 (via PDZ domain). Cannot form tight junction strands on its own. In terms of tissue distribution, kidney-specific, including the thick ascending limb of Henle (TAL).

It is found in the cell junction. The protein localises to the tight junction. It localises to the cell membrane. It carries out the reaction Mg(2+)(in) = Mg(2+)(out). The catalysed reaction is Ca(2+)(in) = Ca(2+)(out). It catalyses the reaction Na(+)(in) = Na(+)(out). The enzyme catalyses K(+)(in) = K(+)(out). It carries out the reaction Rb(+)(in) = Rb(+)(out). The catalysed reaction is Cs(+)(in) = Cs(+)(out). It catalyses the reaction Li(+)(in) = Li(+)(out). In terms of biological role, forms paracellular channels: coassembles with CLDN19 into tight junction strands with cation-selective channels through the strands, conveying epithelial permeability in a process known as paracellular tight junction permeability. Involved in the maintenance of ion gradients along the nephron. In the thick ascending limb (TAL) of Henle's loop, facilitates sodium paracellular permeability from the interstitial compartment to the lumen, contributing to the lumen-positive transepithelial potential that drives paracellular magnesium and calcium reabsorption. In Homo sapiens (Human), this protein is Claudin-16.